Here is a 198-residue protein sequence, read N- to C-terminus: Segregation and condensation protein B (198 aa).

The segment at 168-198 (KLADPATDEPDQNEMDLFFDRFNQSKEQEEE) is disordered.

Belongs to the ScpB family. Homodimer. Homodimerization may be required to stabilize the binding of ScpA to the Smc head domains. Component of a cohesin-like complex composed of ScpA, ScpB and the Smc homodimer, in which ScpA and ScpB bind to the head domain of Smc. The presence of the three proteins is required for the association of the complex with DNA.

The protein resides in the cytoplasm. Functionally, participates in chromosomal partition during cell division. May act via the formation of a condensin-like complex containing Smc and ScpA that pull DNA away from mid-cell into both cell halves. In Listeria monocytogenes serovar 1/2a (strain ATCC BAA-679 / EGD-e), this protein is Segregation and condensation protein B.